The following is a 286-amino-acid chain: Phosphate import ATP-binding protein PstB (286 aa).

Positions 1-27 (MEPKETLRQRWPGRGRTEETGAMKKSD) are disordered. A compositionally biased stretch (basic and acidic residues) spans 15–27 (GRTEETGAMKKSD). The ABC transporter domain maps to 33-281 (MTVEHLNMYY…PDRKETEDYV (249 aa)). ATP is bound at residue 65–72 (GPSGCGKS).

Belongs to the ABC transporter superfamily. Phosphate importer (TC 3.A.1.7) family. The complex is composed of two ATP-binding proteins (PstB), two transmembrane proteins (PstC and PstA) and a solute-binding protein (PstS).

It localises to the cell membrane. It catalyses the reaction phosphate(out) + ATP + H2O = ADP + 2 phosphate(in) + H(+). In terms of biological role, part of the ABC transporter complex PstSACB involved in phosphate import. Responsible for energy coupling to the transport system. This is Phosphate import ATP-binding protein PstB from Rubrobacter xylanophilus (strain DSM 9941 / JCM 11954 / NBRC 16129 / PRD-1).